Here is a 601-residue protein sequence, read N- to C-terminus: 3-hydroxy-3-methylglutaryl-coenzyme A reductase (601 aa).

A disordered region spans residues 1-34 (MDSRRRSPTVTAKAAAGELPLAPHEGQNQQPSIP). The next 2 membrane-spanning stretches (helical) occupy residues 36–58 (SSDV…FFSV) and 86–106 (ALAS…LDFV). Residues 107–179 (QSLIYKPNNE…PLITPQNSEE (73 aa)) form a linker region. Residues 180-601 (DEDIIKAVVA…IASSQLESDS (422 aa)) are catalytic. Glu-273 (charge relay system) is an active-site residue. Asn-337 carries N-linked (GlcNAc...) asparagine glycosylation. Residues Lys-405 and Asp-481 each act as charge relay system in the active site. The Proton donor role is filled by His-579. A glycan (N-linked (GlcNAc...) asparagine) is linked at Asn-583.

It belongs to the HMG-CoA reductase family.

The protein resides in the endoplasmic reticulum membrane. It catalyses the reaction (R)-mevalonate + 2 NADP(+) + CoA = (3S)-3-hydroxy-3-methylglutaryl-CoA + 2 NADPH + 2 H(+). It participates in metabolic intermediate biosynthesis; (R)-mevalonate biosynthesis; (R)-mevalonate from acetyl-CoA: step 3/3. Its function is as follows. Catalyzes the synthesis of mevalonate. The specific precursor of all isoprenoid compounds present in plants. The sequence is that of 3-hydroxy-3-methylglutaryl-coenzyme A reductase (HMGR) from Catharanthus roseus (Madagascar periwinkle).